Here is a 1193-residue protein sequence, read N- to C-terminus: Kinesin-related protein 3 (1193 aa).

The 327-residue stretch at 3–329 (SIRVVCRFRP…LRFGSRAKNI (327 aa)) folds into the Kinesin motor domain. 85-92 (GQTGSGKT) is a binding site for ATP. Disordered stretches follow at residues 377–429 (KSSG…SSNV), 573–600 (SSIASLVPSTPKSSAEMDPLATASKHAD), 611–630 (LLQRTPSKAVGSSKSNTATS), 638–665 (ISESDNIGSGATTTTNNNNATITPATSS), 973–1016 (GGGG…SANL), 1032–1114 (KAEP…PVKI), and 1127–1193 (FKKK…QQKD). Positions 405–429 (SSNLSNSVNSTSNLNTSSNTSSSNV) are enriched in low complexity. Residues 450-962 (ELIKVLQEKC…SQVGVDAQNT (513 aa)) are a coiled coil. 2 stretches are compositionally biased toward polar residues: residues 573 to 585 (SSIASLVPSTPKS) and 614 to 630 (RTPSKAVGSSKSNTATS). Low complexity-rich tracts occupy residues 643-665 (NIGSGATTTTNNNNATITPATSS) and 985-1006 (HSSSSSTSSSSALNHSSINNNH). The segment covering 1007-1016 (TTPTPLSANL) has biased composition (polar residues). Low complexity-rich tracts occupy residues 1044–1078 (NTSIPSSPNHTSSNNINNNSNNNNNNNNNNNIGNS), 1086–1109 (NNNSSISNSNNNSSSNLNANLNGN), and 1132–1149 (PSSTPPSSTNNLSPQSPQ). Composition is skewed to polar residues over residues 1150–1165 (TPSHLSADGSGNISPN) and 1174–1193 (FSYTPAVVTSSTINKDQQKD).

This sequence belongs to the TRAFAC class myosin-kinesin ATPase superfamily. Kinesin family. Kinesin subfamily. As to quaternary structure, dimer.

The protein localises to the cytoplasm. Its subcellular location is the cytoskeleton. Its function is as follows. Microtubule-associated force-producing protein that plays a role in organelle transport. Its motor activity is directed toward the microtubule's plus end. The maximal velocity in an inverted motility assay (moving microtubules on fixed motors) was 1.96 um/s. The chain is Kinesin-related protein 3 (kif3) from Dictyostelium discoideum (Social amoeba).